The sequence spans 428 residues: Flotillin-2 (428 aa).

S-palmitoyl cysteine attachment occurs at residues Cys-4, Cys-19, and Cys-20.

This sequence belongs to the band 7/mec-2 family. Flotillin subfamily. In terms of assembly, heterooligomeric complex of flotillins 1 and 2. Palmitoylation may be required for the formation of higher order complexes and for neurite outgrowth in cultured neural stem cells. In terms of tissue distribution, normally expressed in growing retinal exons of newly differentiated ganglion cells at the retinal margin. After optic nerve injury, expressed in all retinal ganglion cells and retinal axons. Also expressed in endothelial cells, spinal cord, larval and adult skin, muscle processes, thymus and gill macrophages.

Its subcellular location is the membrane. The protein resides in the endosome. In terms of biological role, may play a role in axon growth and regeneration. May be involved in epidermal cell adhesion and epidermal structure and function. This chain is Flotillin-2 (flot2), found in Carassius auratus (Goldfish).